The chain runs to 87 residues: RNA-binding protein Hfq (87 aa).

The Sm domain occupies 9 to 68; the sequence is DPFLNALRRERIPVSIYLVNGIKLQGQIESFDQFVILLKNTVNQMVYKHAISTVVPARPV. The segment at 65–87 is disordered; that stretch reads ARPVSHHSGDRPASDRPAEKSEE. A compositionally biased stretch (basic and acidic residues) spans 71-87; that stretch reads HSGDRPASDRPAEKSEE.

It belongs to the Hfq family.

RNA chaperone that binds small regulatory RNA (sRNAs) and mRNAs to facilitate mRNA translational regulation in response to envelope stress, environmental stress and changes in metabolite concentrations. Also binds with high specificity to tRNAs. Essential for virulence in the suckling mouse model of cholera pathogenesis. The polypeptide is RNA-binding protein Hfq (Vibrio cholerae serotype O1 (strain ATCC 39315 / El Tor Inaba N16961)).